The following is a 481-amino-acid chain: E3 ubiquitin-protein ligase makorin-1 (481 aa).

C3H1-type zinc fingers lie at residues 55-82 (WTKQVTCRYFMHGVCKEGDNCRYSHDLS), 84-111 (SPYGVVCKYFQRGYCVYGDRCRYEHSKP), and 208-235 (ETKKQLCPYAAVGECRYGENCVYLHGDS). The makorin-type Cys-His stretch occupies residues 236-263 (CDMCGLQVLHPVDAAQRSQHIKSCIEAH). Residues 281–335 (CGICMEVVYEKANPSERRFGILSNCNHTYCLKCIRKWRSAKQFESKIIKSCPECR) form an RING-type zinc finger. A C3H1-type 4 zinc finger spans residues 364 to 393 (AMSNKACRYFDEGRGSCPFGGNCFYKHAYP).

As to quaternary structure, interacts with p53/TP53 and CDKN1A. Interacts with TERT, modulating telomere length homeostasis. Auto-ubiquitinated; which leads to proteasomal degradation. In terms of tissue distribution, highly expressed in embryo, in specific cell types of the central nervous system, in brain with the strongest levels of expression in the mantle layers and in testis. Moderate to low levels in somatic tissues.

It catalyses the reaction S-ubiquitinyl-[E2 ubiquitin-conjugating enzyme]-L-cysteine + [acceptor protein]-L-lysine = [E2 ubiquitin-conjugating enzyme]-L-cysteine + N(6)-ubiquitinyl-[acceptor protein]-L-lysine.. It participates in protein modification; protein ubiquitination. Functionally, E3 ubiquitin ligase catalyzing the covalent attachment of ubiquitin moieties onto substrate proteins. These substrates include FILIP1, p53/TP53, CDKN1A and TERT. Keeps cells alive by suppressing p53/TP53 under normal conditions, but stimulates apoptosis by repressing CDKN1A under stress conditions. Acts as a negative regulator of telomerase. Has negative and positive effects on RNA polymerase II-dependent transcription. In Mus musculus (Mouse), this protein is E3 ubiquitin-protein ligase makorin-1 (Mkrn1).